Here is a 346-residue protein sequence, read N- to C-terminus: Histidinol-phosphate aminotransferase (346 aa).

Lys-209 bears the N6-(pyridoxal phosphate)lysine mark.

This sequence belongs to the class-II pyridoxal-phosphate-dependent aminotransferase family. Histidinol-phosphate aminotransferase subfamily. In terms of assembly, homodimer. The cofactor is pyridoxal 5'-phosphate.

It catalyses the reaction L-histidinol phosphate + 2-oxoglutarate = 3-(imidazol-4-yl)-2-oxopropyl phosphate + L-glutamate. It participates in amino-acid biosynthesis; L-histidine biosynthesis; L-histidine from 5-phospho-alpha-D-ribose 1-diphosphate: step 7/9. This Vibrio cholerae serotype O1 (strain ATCC 39541 / Classical Ogawa 395 / O395) protein is Histidinol-phosphate aminotransferase.